The primary structure comprises 324 residues: Glyoxylate/hydroxypyruvate reductase B (324 aa).

Active-site residues include arginine 237 and glutamate 266. The active-site Proton donor is histidine 285.

It belongs to the D-isomer specific 2-hydroxyacid dehydrogenase family. GhrB subfamily. As to quaternary structure, homodimer.

The protein resides in the cytoplasm. The enzyme catalyses glycolate + NADP(+) = glyoxylate + NADPH + H(+). The catalysed reaction is (R)-glycerate + NAD(+) = 3-hydroxypyruvate + NADH + H(+). It catalyses the reaction (R)-glycerate + NADP(+) = 3-hydroxypyruvate + NADPH + H(+). Catalyzes the NADPH-dependent reduction of glyoxylate and hydroxypyruvate into glycolate and glycerate, respectively. The protein is Glyoxylate/hydroxypyruvate reductase B of Salmonella dublin (strain CT_02021853).